Reading from the N-terminus, the 686-residue chain is tRNA 5-methylaminomethyl-2-thiouridine biosynthesis bifunctional protein MnmC (686 aa).

The segment at 1–258 (MPNIPLRVNS…RRALRRQQLD (258 aa)) is tRNA (mnm(5)s(2)U34)-methyltransferase. Residues 276-686 (IGGGVASANL…MRKLIKGKAL (411 aa)) are FAD-dependent cmnm(5)s(2)U34 oxidoreductase.

It in the N-terminal section; belongs to the methyltransferase superfamily. tRNA (mnm(5)s(2)U34)-methyltransferase family. In the C-terminal section; belongs to the DAO family. It depends on FAD as a cofactor.

The protein resides in the cytoplasm. The enzyme catalyses 5-aminomethyl-2-thiouridine(34) in tRNA + S-adenosyl-L-methionine = 5-methylaminomethyl-2-thiouridine(34) in tRNA + S-adenosyl-L-homocysteine + H(+). Catalyzes the last two steps in the biosynthesis of 5-methylaminomethyl-2-thiouridine (mnm(5)s(2)U) at the wobble position (U34) in tRNA. Catalyzes the FAD-dependent demodification of cmnm(5)s(2)U34 to nm(5)s(2)U34, followed by the transfer of a methyl group from S-adenosyl-L-methionine to nm(5)s(2)U34, to form mnm(5)s(2)U34. In Shewanella loihica (strain ATCC BAA-1088 / PV-4), this protein is tRNA 5-methylaminomethyl-2-thiouridine biosynthesis bifunctional protein MnmC.